The chain runs to 306 residues: Ornithine carbamoyltransferase (306 aa).

Carbamoyl phosphate is bound by residues 53–56 (STRT), Q80, R104, and 131–134 (HPCQ). Residues N162, D219, and 223–224 (SM) each bind L-ornithine. Residues 259–260 (CL) and R287 contribute to the carbamoyl phosphate site.

This sequence belongs to the aspartate/ornithine carbamoyltransferase superfamily. OTCase family.

It localises to the cytoplasm. The catalysed reaction is carbamoyl phosphate + L-ornithine = L-citrulline + phosphate + H(+). The protein operates within amino-acid biosynthesis; L-arginine biosynthesis; L-arginine from L-ornithine and carbamoyl phosphate: step 1/3. Its function is as follows. Reversibly catalyzes the transfer of the carbamoyl group from carbamoyl phosphate (CP) to the N(epsilon) atom of ornithine (ORN) to produce L-citrulline. The polypeptide is Ornithine carbamoyltransferase (Pseudomonas syringae pv. tomato (strain ATCC BAA-871 / DC3000)).